A 446-amino-acid chain; its full sequence is MRRHPLLWKLALLQVGFCLLLTWLIYTWGLSVERSTYFLAPADRHYLADYARQAEDAWRREGAAGAERFRKELSAKEDTWVALVGPHLESLGSTPLSAEESSHLTFMRKLDWPMSRRLQDELPYVSIEFPGHPEQGRLVIQLPERLLPGGLTPWTHLVTHGIVPTLLAALLGLLLYRHLVVPLNRLRDRADALRADELESTPLAAPLAARRDELGELAQALEHMAERLRLSLAQQRLLLRTLSHELRTPLARLRIAHDSELPPEQLRQRLDREIGDMQRLLEDTLDLAWMDTERPQLPTEPVLALSVWEALRDDACFESGWDPARLPCRLGVDCRVEVHLDSLAQAMENLLRNAIRHSPEDGTVSLDGEREGDFWHLRLQDQGPGVAEDQLERIFLPYQRLDDSAGEGFGLGLAIARRAIELQGGRLWASNGKPGLCLHLWLPAAA.

Residues 1–9 lie on the Cytoplasmic side of the membrane; the sequence is MRRHPLLWK. Residues 10 to 30 form a helical membrane-spanning segment; sequence LALLQVGFCLLLTWLIYTWGL. At 31–155 the chain is on the periplasmic side; that stretch reads SVERSTYFLA…LLPGGLTPWT (125 aa). The helical transmembrane segment at 156-176 threads the bilayer; the sequence is HLVTHGIVPTLLAALLGLLLY. The HAMP domain occupies 177-233; it reads RHLVVPLNRLRDRADALRADELESTPLAAPLAARRDELGELAQALEHMAERLRLSLA. Over 177 to 446 the chain is Cytoplasmic; that stretch reads RHLVVPLNRL…CLHLWLPAAA (270 aa). One can recognise a Histidine kinase domain in the interval 241 to 446; sequence TLSHELRTPL…CLHLWLPAAA (206 aa). His-244 carries the phosphohistidine; by autocatalysis modification.

It is found in the cell inner membrane. The catalysed reaction is ATP + protein L-histidine = ADP + protein N-phospho-L-histidine.. Functionally, member of the two-component regulatory system PfeR/PfeS. May activate PfeR by phosphorylation. This is Sensor protein PfeS (pfeS) from Pseudomonas aeruginosa (strain ATCC 15692 / DSM 22644 / CIP 104116 / JCM 14847 / LMG 12228 / 1C / PRS 101 / PAO1).